The chain runs to 476 residues: FAD-dependent monooxygenase dpasE (476 aa).

A signal peptide spans 1-21; that stretch reads MSQPAFKIIIVGCSVTGLTLA. The FAD site is built by E35, A49, and R109. Residues N190 and N219 are each glycosylated (N-linked (GlcNAc...) asparagine). D308 and A321 together coordinate FAD. The helical transmembrane segment at 441–461 threads the bilayer; it reads GAGFWITAFLSLSLLAVAATM.

The protein belongs to the paxM FAD-dependent monooxygenase family. The cofactor is FAD.

Its subcellular location is the membrane. It participates in secondary metabolite biosynthesis; terpenoid biosynthesis. Functionally, FAD-dependent monooxygenase; part of the gene cluster that mediates the biosynthesis of the diterpenoid pyrones subglutinols A and B. The first step of the pathway is the synthesis of the alpha-pyrone moiety by the polyketide synthase dpasA via condensation of one acetyl-CoA starter unit with 3 malonyl-CoA units and 2 methylations. The alpha-pyrone is then combined with geranylgeranyl pyrophosphate (GGPP) formed by the GGPP synthase dpasD through the action of the prenyltransferase dpasC to yield a linear alpha-pyrone diterpenoid. Subsequent steps in the diterpenoid pyrone biosynthetic pathway involve the decalin core formation, which is initiated by the epoxidation of the C10-C11 olefin by the FAD-dependent oxidoreductase dpasE, and is followed by a cyclization cascade catalyzed by the terpene cyclase dpasB. The FAD-linked oxidoreductase dpasF is then involved in tetrahydrofuran (THF) ring formation at the C5 unit to complete the formation of subglutinols A and B. DpasF possesses also an additional catalytic ability of multi-step oxidations to generate a new DDP analog with an enone system at the C5 named FDDP A. The chain is FAD-dependent monooxygenase dpasE from Apiospora sacchari (Arthrinium sacchari).